We begin with the raw amino-acid sequence, 298 residues long: MQLEKMITEGSNAASAEIDRVSTLEMCRIINDEDKTVPLAVERVLPDIAAAIDVIHAQVSGGGRLIYLGAGTSGRLGILDASECPPTYGVKPGLVVGLIAGGEYAIQHAVEGAEDSREGGVNDLKNIGLTAQDVVVGIAASGRTPYVIAGLEYARQLGCRTVGISCNPGSAVSTTAEFAITPVVGAEVVTGSSRMKAGTAQKLVLNMLSTGLMIKSGKVFGNLMVDVVATNEKLHVRQVNIVKNATGCSAEQAEAALVACERNCKTAIVMVLKNLDAAEAKKRLDQHGGFIRQVLDKE.

Positions 55-218 (IHAQVSGGGR…STGLMIKSGK (164 aa)) constitute an SIS domain. Glu-83 (proton donor) is an active-site residue. Glu-114 is a catalytic residue.

It belongs to the GCKR-like family. MurNAc-6-P etherase subfamily. Homodimer.

The enzyme catalyses N-acetyl-D-muramate 6-phosphate + H2O = N-acetyl-D-glucosamine 6-phosphate + (R)-lactate. It functions in the pathway amino-sugar metabolism; 1,6-anhydro-N-acetylmuramate degradation. Its pathway is amino-sugar metabolism; N-acetylmuramate degradation. It participates in cell wall biogenesis; peptidoglycan recycling. Specifically catalyzes the cleavage of the D-lactyl ether substituent of MurNAc 6-phosphate, producing GlcNAc 6-phosphate and D-lactate. Together with AnmK, is also required for the utilization of anhydro-N-acetylmuramic acid (anhMurNAc) either imported from the medium or derived from its own cell wall murein, and thus plays a role in cell wall recycling. The polypeptide is N-acetylmuramic acid 6-phosphate etherase (Escherichia coli O17:K52:H18 (strain UMN026 / ExPEC)).